Consider the following 295-residue polypeptide: Ribosomal protein L11 methyltransferase (295 aa).

4 residues coordinate S-adenosyl-L-methionine: T139, G166, D188, and N231.

This sequence belongs to the methyltransferase superfamily. PrmA family.

It localises to the cytoplasm. The enzyme catalyses L-lysyl-[protein] + 3 S-adenosyl-L-methionine = N(6),N(6),N(6)-trimethyl-L-lysyl-[protein] + 3 S-adenosyl-L-homocysteine + 3 H(+). In terms of biological role, methylates ribosomal protein L11. The protein is Ribosomal protein L11 methyltransferase of Cyanothece sp. (strain PCC 7425 / ATCC 29141).